Consider the following 473-residue polypeptide: Photosystem II CP43 reaction center protein (473 aa).

Residues 1 to 14 constitute a propeptide that is removed on maturation; sequence MKTLYSLRRFYPVE. Threonine 15 is modified (N-acetylthreonine). Threonine 15 bears the Phosphothreonine mark. 5 helical membrane-spanning segments follow: residues 69 to 93, 134 to 155, 178 to 200, 255 to 275, and 291 to 312; these read LFEV…PHLA, LLGP…KDRN, KALY…RKIT, KPFA…LSYS, and WFNN…ASQA. Glutamate 367 is a [CaMn4O5] cluster binding site. The helical transmembrane segment at 447 to 471 threads the bilayer; sequence RARAAAAGFEKGIDRDFEPVLSMTP.

Belongs to the PsbB/PsbC family. PsbC subfamily. As to quaternary structure, PSII is composed of 1 copy each of membrane proteins PsbA, PsbB, PsbC, PsbD, PsbE, PsbF, PsbH, PsbI, PsbJ, PsbK, PsbL, PsbM, PsbT, PsbX, PsbY, PsbZ, Psb30/Ycf12, at least 3 peripheral proteins of the oxygen-evolving complex and a large number of cofactors. It forms dimeric complexes. The cofactor is Binds multiple chlorophylls and provides some of the ligands for the Ca-4Mn-5O cluster of the oxygen-evolving complex. It may also provide a ligand for a Cl- that is required for oxygen evolution. PSII binds additional chlorophylls, carotenoids and specific lipids..

The protein resides in the plastid. It localises to the chloroplast thylakoid membrane. Functionally, one of the components of the core complex of photosystem II (PSII). It binds chlorophyll and helps catalyze the primary light-induced photochemical processes of PSII. PSII is a light-driven water:plastoquinone oxidoreductase, using light energy to abstract electrons from H(2)O, generating O(2) and a proton gradient subsequently used for ATP formation. The polypeptide is Photosystem II CP43 reaction center protein (Morus indica (Mulberry)).